A 430-amino-acid chain; its full sequence is Serine--tRNA ligase (430 aa).

237-239 (TAE) is a binding site for L-serine. 268–270 (RSE) contacts ATP. Glu291 lines the L-serine pocket. ATP is bound at residue 355 to 358 (EISS). L-serine is bound at residue Ser391.

This sequence belongs to the class-II aminoacyl-tRNA synthetase family. Type-1 seryl-tRNA synthetase subfamily. As to quaternary structure, homodimer. The tRNA molecule binds across the dimer.

It is found in the cytoplasm. It catalyses the reaction tRNA(Ser) + L-serine + ATP = L-seryl-tRNA(Ser) + AMP + diphosphate + H(+). It carries out the reaction tRNA(Sec) + L-serine + ATP = L-seryl-tRNA(Sec) + AMP + diphosphate + H(+). It participates in aminoacyl-tRNA biosynthesis; selenocysteinyl-tRNA(Sec) biosynthesis; L-seryl-tRNA(Sec) from L-serine and tRNA(Sec): step 1/1. Catalyzes the attachment of serine to tRNA(Ser). Is also able to aminoacylate tRNA(Sec) with serine, to form the misacylated tRNA L-seryl-tRNA(Sec), which will be further converted into selenocysteinyl-tRNA(Sec). The chain is Serine--tRNA ligase from Cronobacter sakazakii (strain ATCC BAA-894) (Enterobacter sakazakii).